We begin with the raw amino-acid sequence, 101 residues long: MILEHVLVLSAYLFSIGIYGLITSRNMVRALMCLELILNAVNINFVTFSDFFDSRQLKGDIFSIFVIAIAAAEAAIGLAIVSSIYRNRKSTRINQSNLLNK.

Helical transmembrane passes span 2-22 (ILEHVLVLSAYLFSIGIYGLI), 32-52 (MCLELILNAVNINFVTFSDFF), and 61-81 (IFSIFVIAIAAAEAAIGLAIV).

It belongs to the complex I subunit 4L family. NDH is composed of at least 16 different subunits, 5 of which are encoded in the nucleus.

The protein resides in the plastid. It localises to the chloroplast thylakoid membrane. It carries out the reaction a plastoquinone + NADH + (n+1) H(+)(in) = a plastoquinol + NAD(+) + n H(+)(out). It catalyses the reaction a plastoquinone + NADPH + (n+1) H(+)(in) = a plastoquinol + NADP(+) + n H(+)(out). In terms of biological role, NDH shuttles electrons from NAD(P)H:plastoquinone, via FMN and iron-sulfur (Fe-S) centers, to quinones in the photosynthetic chain and possibly in a chloroplast respiratory chain. The immediate electron acceptor for the enzyme in this species is believed to be plastoquinone. Couples the redox reaction to proton translocation, and thus conserves the redox energy in a proton gradient. This is NAD(P)H-quinone oxidoreductase subunit 4L, chloroplastic from Eucalyptus globulus subsp. globulus (Tasmanian blue gum).